Here is a 255-residue protein sequence, read N- to C-terminus: Thiazole synthase (255 aa).

The active-site Schiff-base intermediate with DXP is the Lys-96. Residues Gly-157, Ala-183–Gly-184, and Asn-205–Thr-206 contribute to the 1-deoxy-D-xylulose 5-phosphate site.

Belongs to the ThiG family. In terms of assembly, homotetramer. Forms heterodimers with either ThiH or ThiS.

Its subcellular location is the cytoplasm. The enzyme catalyses [ThiS sulfur-carrier protein]-C-terminal-Gly-aminoethanethioate + 2-iminoacetate + 1-deoxy-D-xylulose 5-phosphate = [ThiS sulfur-carrier protein]-C-terminal Gly-Gly + 2-[(2R,5Z)-2-carboxy-4-methylthiazol-5(2H)-ylidene]ethyl phosphate + 2 H2O + H(+). Its pathway is cofactor biosynthesis; thiamine diphosphate biosynthesis. Functionally, catalyzes the rearrangement of 1-deoxy-D-xylulose 5-phosphate (DXP) to produce the thiazole phosphate moiety of thiamine. Sulfur is provided by the thiocarboxylate moiety of the carrier protein ThiS. In vitro, sulfur can be provided by H(2)S. The polypeptide is Thiazole synthase (Heliobacterium modesticaldum (strain ATCC 51547 / Ice1)).